A 411-amino-acid chain; its full sequence is Bifunctional protein GlmU (411 aa).

The tract at residues 1–204 (MDAVILCAGK…ENNIKGIKLN (204 aa)) is pyrophosphorylase. UTP-binding positions include 6-9 (LCAG), Gln74, and Gly79. Residues Thr80, Gly132, Glu144, and Asn158 each coordinate N-acetyl-alpha-D-glucosamine 1-phosphate. The linker stretch occupies residues 205-224 (GYWNDIGKPWDLLDANTHIL). The N-acetyltransferase stretch occupies residues 225-411 (KNIKTDIKGK…EEIIIKTKRK (187 aa)). Residue His308 is the Proton acceptor of the active site. Positions 384 and 401 each coordinate acetyl-CoA.

This sequence in the N-terminal section; belongs to the N-acetylglucosamine-1-phosphate uridyltransferase family. The protein in the C-terminal section; belongs to the transferase hexapeptide repeat family.

It catalyses the reaction N-acetyl-alpha-D-glucosamine 1-phosphate + UTP + H(+) = UDP-N-acetyl-alpha-D-glucosamine + diphosphate. The enzyme catalyses alpha-D-glucosamine 1-phosphate + acetyl-CoA = N-acetyl-alpha-D-glucosamine 1-phosphate + CoA + H(+). It participates in nucleotide-sugar biosynthesis; UDP-N-acetyl-alpha-D-glucosamine biosynthesis; N-acetyl-alpha-D-glucosamine 1-phosphate from alpha-D-glucosamine 6-phosphate (route II): step 2/2. It functions in the pathway nucleotide-sugar biosynthesis; UDP-N-acetyl-alpha-D-glucosamine biosynthesis; UDP-N-acetyl-alpha-D-glucosamine from N-acetyl-alpha-D-glucosamine 1-phosphate: step 1/1. In terms of biological role, catalyzes the last two sequential reactions in the de novo biosynthetic pathway for UDP-N-acetyl-glucosamine (UDP-GlcNAc). Responsible for the acetylation of GlcN-1-P to GlcNAc-1-P, and for the uridyl transfer from UTP to GlcNAc-1-P, to produce UDP-GlcNAc and pyrophosphate. The sequence is that of Bifunctional protein GlmU from Methanococcus aeolicus (strain ATCC BAA-1280 / DSM 17508 / OCM 812 / Nankai-3).